The chain runs to 418 residues: Tyrosine--tRNA ligase (418 aa).

Residue Y35 coordinates L-tyrosine. A 'HIGH' region motif is present at residues 40–49 (PTAKSLHIGH). L-tyrosine is bound by residues Y168 and Q172. A 'KMSKS' region motif is present at residues 228–232 (KYGKT). Position 231 (K231) interacts with ATP. Residues 352–410 (PTVVGAMVAAGVVDTKSGGRRAVAEGGAYLNNVKVADPDQRLTDDDFLCGRVALVRRGK) enclose the S4 RNA-binding domain.

The protein belongs to the class-I aminoacyl-tRNA synthetase family. TyrS type 1 subfamily. Homodimer.

It is found in the cytoplasm. The catalysed reaction is tRNA(Tyr) + L-tyrosine + ATP = L-tyrosyl-tRNA(Tyr) + AMP + diphosphate + H(+). Functionally, catalyzes the attachment of tyrosine to tRNA(Tyr) in a two-step reaction: tyrosine is first activated by ATP to form Tyr-AMP and then transferred to the acceptor end of tRNA(Tyr). The protein is Tyrosine--tRNA ligase of Cutibacterium acnes (strain DSM 16379 / KPA171202) (Propionibacterium acnes).